Here is a 619-residue protein sequence, read N- to C-terminus: Glucokinase regulatory protein (619 aa).

2 SIS domains span residues 90 to 283 (VQEV…AESN) and 319 to 498 (TATS…LRGK). 107-109 (CGT) contacts keto-D-fructose 6-phosphate. Residues 109–110 (TS), Glu153, 179–181 (SCG), and Glu347 contribute to the beta-D-fructose 1-phosphate site. Keto-D-fructose 6-phosphate-binding positions include 179 to 183 (SCGLS) and Glu347. The interval 462–464 (ILF) is essential for interaction with GCK. Residue Lys513 coordinates keto-D-fructose 6-phosphate. A beta-D-fructose 1-phosphate-binding site is contributed by Lys513.

The protein belongs to the GCKR family. In terms of assembly, interacts (fructose 6-phosphate bound form) with gck.

The protein localises to the nucleus. It localises to the cytoplasm. The protein resides in the mitochondrion. In terms of biological role, regulates glucokinase (gck) by forming an inactive complex with this enzyme. The affinity of gckr for gck is modulated by fructose metabolites: gckr with bound fructose 6-phosphate has increased affinity for gck, while gckr with bound fructose 1-phosphate has strongly decreased affinity for gck and does not inhibit gck activity. This chain is Glucokinase regulatory protein, found in Xenopus laevis (African clawed frog).